The chain runs to 531 residues: Tyrosine 2,3-aminomutase (531 aa).

Residue tyrosine 51 is the Proton donor/acceptor of the active site. A substrate-binding site is contributed by histidine 81. A cross-link (5-imidazolinone (Ala-Gly)) is located at residues 140 to 142 (ASG). The residue at position 141 (serine 141) is a 2,3-didehydroalanine (Ser). Substrate-binding residues include asparagine 193 and arginine 298.

It belongs to the TAL/TAM family. In terms of assembly, homotetramer; dimer of dimers. In terms of processing, contains an active site 4-methylidene-imidazol-5-one (MIO), which is formed autocatalytically by cyclization and dehydration of residues Ala-Ser-Gly.

The catalysed reaction is L-tyrosine = 3-amino-3-(4-hydroxyphenyl)propanoate. It carries out the reaction L-tyrosine = (E)-4-coumarate + NH4(+). Its function is as follows. Has aminomutase and, to a lesser extent, ammonia-lyase activity. Primarily, catalyzes the rearrangement of L-tyrosine to R-beta-tyrosine, which is incorporated into secondary metabolites called chondramides. The aminomutase activity mainly produces R-beta-tyrosine but also S-beta tyrosine in smaller amounts. Does not accept D-tyrosine, L-histidine or L-phenylalanine as substrates. This is Tyrosine 2,3-aminomutase from Chondromyces crocatus.